The primary structure comprises 377 residues: 26S proteasome non-ATPase regulatory subunit 4 (377 aa).

The 184-residue stretch at 5–188 (STMVCVDNSE…LADALISSPI (184 aa)) folds into the VWFA domain. Residue Lys122 forms a Glycyl lysine isopeptide (Lys-Gly) (interchain with G-Cter in SUMO2) linkage. The interaction with UBQLN1 stretch occupies residues 197–262 (LGLGASDFEF…TEDSDDALLK (66 aa)). Positions 211-230 (SADPELALALRVSMEEQRQR) constitute a UIM 1 domain. An essential for ubiquitin-binding region spans residues 216–220 (LALAL). Over residues 224-237 (MEEQRQRQEEEARR) the composition is skewed to basic and acidic residues. The interval 224–255 (MEEQRQRQEEEARRAAAASAAEAGIATTGTED) is disordered. A phosphothreonine mark is found at Thr250 and Thr253. A phosphoserine mark is found at Ser256 and Ser266. The UIM 2 domain occupies 282-301 (TEEEQIAYAMQMSLQGAEFG). Residues 287–291 (IAYAM) are essential for ubiquitin-binding. 2 disordered regions span residues 300–327 (FGQA…DDYD) and 341–377 (NLPG…EDKK). 2 positions are modified to phosphoserine: Ser358 and Ser361. The span at 365–377 (KDGKKDKKEEDKK) shows a compositional bias: basic and acidic residues.

It belongs to the proteasome subunit S5A family. In terms of assembly, component of the 19S proteasome regulatory particle complex. The 26S proteasome consists of a 20S core particle (CP) and two 19S regulatory subunits (RP). The regulatory particle is made of a lid composed of 9 subunits, a base containing 6 ATPases and few additional components including PSMD4. Interacts with NUB1. Interacts with SQSTM1. Interacts with UBQLN4. Interacts with UBE3A. Interacts with UBQLN1 (via ubiquitin-like domain). Interacts with DDI2.

Component of the 26S proteasome, a multiprotein complex involved in the ATP-dependent degradation of ubiquitinated proteins. This complex plays a key role in the maintenance of protein homeostasis by removing misfolded or damaged proteins, which could impair cellular functions, and by removing proteins whose functions are no longer required. Therefore, the proteasome participates in numerous cellular processes, including cell cycle progression, apoptosis, or DNA damage repair. PSMD4 acts as an ubiquitin receptor subunit through ubiquitin-interacting motifs and selects ubiquitin-conjugates for destruction. Displays a preferred selectivity for longer polyubiquitin chains. This is 26S proteasome non-ATPase regulatory subunit 4 (PSMD4) from Homo sapiens (Human).